A 911-amino-acid polypeptide reads, in one-letter code: MFKQLSQIGKNLTDELAKGLADDMSPTPSEQQIEDDKSGLPKEIQAKLRKFEKYEQKYPLLLSAYKNEKLKSEKLEAVEKILAENTPISNIDDAVDTLPAFFQDLNNKNNLLNDEIKRLTKQNSEIPESASSETLKDKEEEFLKKEQNYKNDIDDLKKKMEALNIELDTVQKEKNDTVSGLREKIVALENILKEEREAKKQKEEVSISELKEELAIKNHSLEDSRMKITELEQNLSSKSTIMEEKSSELAELNITLKEKERKLSELEKKMKELPKAISHQNVGNNNRRKKNRNKGKKNKGGITTGDISEEETVDNSINTEEYDKLKENLQELQEKYKDCEDWKQKYEDIEAELKDAKELENSQLEKSAKELETLNTELIDTKKSLKEKNSELEEVRDMLRTVGNELVDAKDEIKESSSKQNEEVKTVKLELDDLRHKNATMIEAYEAKNTELRSKIELLSKKVEHLKNLCTEKEKEQTTSQNKVAKLNEEISQLTYEKSNITKELTSLRTSYKQKEKTVSYLEEQVKQFSEQKDVAEKSTEQLRKDHAKISNRLDLLKKENETLHNDIAKNSNSYEEYLKENGKLSERLNILQEKYNTLQNVKSNSNEHIDSIKRQCEELNVKLKESTKKILSLEDELNEYANIVQDKTREANTLRRLVSDSQTDDSSKQKELENKLAYLTDEKNKLEAELDLQTSRKATELQEWKHTVTELKSEIHALKLREEGLKSEVDALKHVNNDIKRKTQATSDDSDQLEQITSNLKLSLSKADEKNFELQSANEKLLNLNNELNKKFDRLLKNYRSLSSQLNALKERQYSDKSGRVSRSGSIGTLANANIDSSPANNSNPTKLEKIRSSSSLELDSEKNEKIAYIKNVLLGFLEHKEQRNQLLPVISMLLQLDSTDEKRLVMSLK.

Disordered regions lie at residues 16–41 (LAKGLADDMSPTPSEQQIEDDKSGLP) and 271–314 (KELP…ETVD). The stretch at 101–280 (FFQDLNNKNN…KELPKAISHQ (180 aa)) forms a coiled coil. Residues 286-299 (NRRKKNRNKGKKNK) show a composition bias toward basic residues. 2 positions are modified to phosphoserine: Ser308 and Ser660. Coiled-coil stretches lie at residues 312–735 (TVDN…ALKH) and 766–814 (SKAD…KERQ). Positions 814–850 (QYSDKSGRVSRSGSIGTLANANIDSSPANNSNPTKLE) are disordered. Positions 822 to 847 (VSRSGSIGTLANANIDSSPANNSNPT) are enriched in polar residues. Ser827 bears the Phosphoserine mark. Phosphothreonine is present on Thr830. One can recognise a GRIP domain in the interval 861–909 (DSEKNEKIAYIKNVLLGFLEHKEQRNQLLPVISMLLQLDSTDEKRLVMS).

Forms oligomers and is present in high-molecular-mass complexes. Interacts with ARL1.

It localises to the cytoplasm. It is found in the golgi apparatus membrane. In terms of biological role, involved in vesicular transport between an endosomal compartment and the Golgi apparatus. This chain is Golgin IMH1 (IMH1), found in Saccharomyces cerevisiae (strain ATCC 204508 / S288c) (Baker's yeast).